Consider the following 61-residue polypeptide: uncharacterized protein (61 aa).

A coiled-coil region spans residues Tyr10–Glu61.

This is an uncharacterized protein from Acidianus bottle-shaped virus (isolate Italy/Pozzuoli) (ABV).